A 398-amino-acid polypeptide reads, in one-letter code: Acetylornithine aminotransferase (398 aa).

Residues 105–106 (GA) and phenylalanine 138 contribute to the pyridoxal 5'-phosphate site. Arginine 141 lines the N(2)-acetyl-L-ornithine pocket. A pyridoxal 5'-phosphate-binding site is contributed by 223 to 226 (DEVQ). Lysine 252 is modified (N6-(pyridoxal phosphate)lysine). N(2)-acetyl-L-ornithine is bound at residue threonine 280. Residue threonine 281 participates in pyridoxal 5'-phosphate binding.

It belongs to the class-III pyridoxal-phosphate-dependent aminotransferase family. ArgD subfamily. In terms of assembly, homodimer. It depends on pyridoxal 5'-phosphate as a cofactor.

The protein resides in the cytoplasm. It carries out the reaction N(2)-acetyl-L-ornithine + 2-oxoglutarate = N-acetyl-L-glutamate 5-semialdehyde + L-glutamate. The protein operates within amino-acid biosynthesis; L-arginine biosynthesis; N(2)-acetyl-L-ornithine from L-glutamate: step 4/4. The protein is Acetylornithine aminotransferase of Methanocaldococcus jannaschii (strain ATCC 43067 / DSM 2661 / JAL-1 / JCM 10045 / NBRC 100440) (Methanococcus jannaschii).